The following is a 473-amino-acid chain: Serine palmitoyltransferase 1 (473 aa).

Residues 1–15 (MATATEQWVLVEMVQ) lie on the Lumenal side of the membrane. An interaction with SPTLC2 region spans residues 1–66 (MATATEQWVL…KEELIEEWQP (66 aa)). Residues 16–36 (ALYEAPAYHLILEGILILWII) form a helical membrane-spanning segment. Residues 37 to 473 (RLLFSKTYKL…IKEVAQAVLL (437 aa)) are Cytoplasmic-facing. Y164 carries the phosphotyrosine; by ABL modification.

Belongs to the class-II pyridoxal-phosphate-dependent aminotransferase family. Component of the serine palmitoyltransferase (SPT) complex, which is also composed of SPTLC2 or SPTLC3 and SPTSSA or SPTSSB. The heterodimer consisting of SPTLC1 and SPTLC2/SPTLC3 forms the catalytic core of the enzyme, while SPTSSA or SPTSSB subunits determine substrate specificity. SPT also interacts with ORMDL proteins, especially ORMDL3, which negatively regulate SPT activity in the presence of ceramides. Forms dimers of heterodimers with SPTLC2. Interacts with RTN4 (isoform B). The cofactor is pyridoxal 5'-phosphate. In terms of processing, phosphorylation at Tyr-164 inhibits activity and promotes cell survival. Widely expressed. Not detected in small intestine.

The protein localises to the endoplasmic reticulum membrane. The catalysed reaction is L-serine + hexadecanoyl-CoA + H(+) = 3-oxosphinganine + CO2 + CoA. The enzyme catalyses octadecanoyl-CoA + L-serine + H(+) = 3-oxoeicosasphinganine + CO2 + CoA. It catalyses the reaction tetradecanoyl-CoA + L-serine + H(+) = 3-oxohexadecasphinganine + CO2 + CoA. It carries out the reaction dodecanoyl-CoA + L-serine + H(+) = 3-oxotetradecasphinganine + CO2 + CoA. It functions in the pathway lipid metabolism; sphingolipid metabolism. With respect to regulation, SPT complex catalytic activity is negatively regulated by ORMDL proteins, including ORMDL3, in the presence of ceramides. This mechanism allows to maintain ceramide levels at sufficient concentrations for the production of complex sphingolipids, but which prevents the accumulation of ceramides to levels that trigger apoptosis. Component of the serine palmitoyltransferase multisubunit enzyme (SPT) that catalyzes the initial and rate-limiting step in sphingolipid biosynthesis by condensing L-serine and activated acyl-CoA (most commonly palmitoyl-CoA) to form long-chain bases. The SPT complex is also composed of SPTLC2 or SPTLC3 and SPTSSA or SPTSSB. Within this complex, the heterodimer with SPTLC2 or SPTLC3 forms the catalytic core. The composition of the serine palmitoyltransferase (SPT) complex determines the substrate preference. The SPTLC1-SPTLC2-SPTSSA complex shows a strong preference for C16-CoA substrate, while the SPTLC1-SPTLC3-SPTSSA isozyme uses both C14-CoA and C16-CoA as substrates, with a slight preference for C14-CoA. The SPTLC1-SPTLC2-SPTSSB complex shows a strong preference for C18-CoA substrate, while the SPTLC1-SPTLC3-SPTSSB isozyme displays an ability to use a broader range of acyl-CoAs, without apparent preference. Required for adipocyte cell viability and metabolic homeostasis. The protein is Serine palmitoyltransferase 1 (SPTLC1) of Homo sapiens (Human).